Consider the following 506-residue polypeptide: Galactose/methyl galactoside import ATP-binding protein MglA (506 aa).

2 ABC transporter domains span residues 14-249 (LEMS…VGRS) and 264-506 (VILE…SLHL). 46-53 (GENGAGKS) is an ATP binding site.

Belongs to the ABC transporter superfamily. Galactose/methyl galactoside importer (TC 3.A.1.2.3) family. As to quaternary structure, the complex is composed of one ATP-binding protein (MglA), two transmembrane proteins (MglC) and a solute-binding protein (MglB).

It is found in the cell inner membrane. The enzyme catalyses D-galactose(out) + ATP + H2O = D-galactose(in) + ADP + phosphate + H(+). It catalyses the reaction methyl beta-D-galactoside(out) + ATP + H2O = methyl beta-D-galactoside(in) + ADP + phosphate + H(+). In terms of biological role, part of the ABC transporter complex MglABC involved in galactose/methyl galactoside import. Responsible for energy coupling to the transport system. The protein is Galactose/methyl galactoside import ATP-binding protein MglA of Yersinia pestis bv. Antiqua (strain Antiqua).